Consider the following 155-residue polypeptide: Ribonuclease H (155 aa).

The RNase H type-1 domain occupies 1 to 142 (MLKQVEIFTD…CDELARAAAS (142 aa)). 4 residues coordinate Mg(2+): aspartate 10, glutamate 48, aspartate 70, and aspartate 134.

The protein belongs to the RNase H family. In terms of assembly, monomer. Mg(2+) is required as a cofactor.

It localises to the cytoplasm. It carries out the reaction Endonucleolytic cleavage to 5'-phosphomonoester.. Functionally, endonuclease that specifically degrades the RNA of RNA-DNA hybrids. The protein is Ribonuclease H of Klebsiella pneumoniae (strain 342).